A 739-amino-acid polypeptide reads, in one-letter code: Sulfate transporter (739 aa).

Composition is skewed to basic and acidic residues over residues 1 to 17 (MSSENKEQHDLSPRDLP) and 31 to 46 (TQRRSGTDLRQSETGH). A disordered region spans residues 1 to 47 (MSSENKEQHDLSPRDLPEEAFGFPSELPLETQRRSGTDLRQSETGHG). Serine 12 bears the Phosphoserine mark. Transmembrane regions (helical) follow at residues 112-132 (VMSGLIVGILLVPQSIAYSLL) and 137-157 (PIYGLYTSFFASIIYFLFGTS). Asparagine 205 is a glycosylation site (N-linked (GlcNAc...) asparagine). 2 consecutive transmembrane segments (helical) span residues 227–247 (FMAGVYQVAMGFFQVGFVSVY) and 255–275 (GFVTGASFTILTSQAKYLLGL). N-linked (GlcNAc...) asparagine glycosylation occurs at asparagine 357. The next 4 helical transmembrane spans lie at 378 to 398 (LIPNVAVDAIAISIIGFAITV), 420 to 440 (AIGFCNIIPSFFHCITTSAAL), 455 to 475 (LSAIVTALVLLLVLLVIAPLF), and 524 to 544 (LLSTEIGLLVGVCFSMFCVIL). An STAS domain is found at 568 to 719 (TYKNLRSKSG…YSLSEAVAFA (152 aa)).

Belongs to the SLC26A/SulP transporter (TC 2.A.53) family. In terms of processing, N-glycosylated. As to expression, distributed mainly in the thymus, testis and osteoblastic cells. Highly expressed in the bone, cartilage, kidney and colon.

Its subcellular location is the cell membrane. It is found in the apical cell membrane. It catalyses the reaction oxalate(in) + sulfate(out) = oxalate(out) + sulfate(in). The enzyme catalyses sulfate(out) + 2 chloride(in) = sulfate(in) + 2 chloride(out). It carries out the reaction oxalate(out) + 2 chloride(in) = oxalate(in) + 2 chloride(out). The catalysed reaction is bromide(in) + chloride(out) = bromide(out) + chloride(in). It catalyses the reaction nitrate(in) + chloride(out) = nitrate(out) + chloride(in). The enzyme catalyses iodide(in) + chloride(out) = iodide(out) + chloride(in). In terms of biological role, sulfate transporter which mediates sulfate uptake into chondrocytes in order to maintain adequate sulfation of proteoglycans which is needed for cartilage development. Mediates electroneutral anion exchange of sulfate ions for oxalate ions, sulfate and oxalate ions for chloride and/or hydroxyl ions and chloride ions for bromide, iodide and nitrate ions. The coupling of sulfate transport to both hydroxyl and chloride ions likely serves to ensure transport at both acidic pH when most sulfate uptake is mediated by sulfate-hydroxide exchange and alkaline pH when most sulfate uptake is mediated by sulfate-chloride exchange. Essential for chondrocyte proliferation, differentiation and cell size expansion. The chain is Sulfate transporter (Slc26a2) from Mus musculus (Mouse).